An 87-amino-acid chain; its full sequence is Small ribosomal subunit protein bS20 (87 aa).

Residues 1 to 11 (MANHKSALKRI) are compositionally biased toward basic residues. The disordered stretch occupies residues 1–23 (MANHKSALKRIKQTEKRTERNRH).

It belongs to the bacterial ribosomal protein bS20 family.

Functionally, binds directly to 16S ribosomal RNA. This is Small ribosomal subunit protein bS20 from Geotalea daltonii (strain DSM 22248 / JCM 15807 / FRC-32) (Geobacter daltonii).